The primary structure comprises 225 residues: Ribosomal RNA large subunit methyltransferase E (225 aa).

S-adenosyl-L-methionine is bound by residues Gly64, Trp66, Asp93, Asp109, and Asp138. The active-site Proton acceptor is the Lys178.

This sequence belongs to the class I-like SAM-binding methyltransferase superfamily. RNA methyltransferase RlmE family.

The protein resides in the cytoplasm. It carries out the reaction uridine(2552) in 23S rRNA + S-adenosyl-L-methionine = 2'-O-methyluridine(2552) in 23S rRNA + S-adenosyl-L-homocysteine + H(+). Its function is as follows. Specifically methylates the uridine in position 2552 of 23S rRNA at the 2'-O position of the ribose in the fully assembled 50S ribosomal subunit. This Cupriavidus pinatubonensis (strain JMP 134 / LMG 1197) (Cupriavidus necator (strain JMP 134)) protein is Ribosomal RNA large subunit methyltransferase E.